A 25-amino-acid polypeptide reads, in one-letter code: Bioremediase (25 aa).

Positions 1-25 (DFPIANGERQSPVDIDTKAVVQDPA) constitute an Alpha-carbonic anhydrase domain. The interval 1 to 25 (DFPIANGERQSPVDIDTKAVVQDPA) is disordered.

The protein belongs to the alpha-carbonic anhydrase family. Requires Zn(2+) as cofactor.

Functionally, releases silica from silica-rich substances. This is Bioremediase from Thermoanaerobacter sp.